We begin with the raw amino-acid sequence, 144 residues long: 3-dehydroquinate dehydratase (144 aa).

The Proton acceptor role is filled by Tyr-24. The substrate site is built by Asn-76, His-82, and Asp-89. Residue His-102 is the Proton donor of the active site. Substrate-binding positions include 103–104 (LS) and Arg-113.

The protein belongs to the type-II 3-dehydroquinase family. Homododecamer.

It carries out the reaction 3-dehydroquinate = 3-dehydroshikimate + H2O. It functions in the pathway metabolic intermediate biosynthesis; chorismate biosynthesis; chorismate from D-erythrose 4-phosphate and phosphoenolpyruvate: step 3/7. In terms of biological role, catalyzes a trans-dehydration via an enolate intermediate. The protein is 3-dehydroquinate dehydratase of Nitrosomonas europaea (strain ATCC 19718 / CIP 103999 / KCTC 2705 / NBRC 14298).